The chain runs to 389 residues: Chalcone synthase 9 (389 aa).

C164 is a catalytic residue.

Belongs to the thiolase-like superfamily. Chalcone/stilbene synthases family.

It carries out the reaction (E)-4-coumaroyl-CoA + 3 malonyl-CoA + 3 H(+) = 2',4,4',6'-tetrahydroxychalcone + 3 CO2 + 4 CoA. Its pathway is secondary metabolite biosynthesis; flavonoid biosynthesis. In terms of biological role, the primary product of this enzyme is 4,2',4',6'-tetrahydroxychalcone (also termed naringenin-chalcone or chalcone) which can under specific conditions spontaneously isomerize into naringenin. This chain is Chalcone synthase 9 (CHS9), found in Medicago sativa (Alfalfa).